Consider the following 220-residue polypeptide: Ribose-5-phosphate isomerase A (220 aa).

Residues 25-28 (TGST), 80-83 (DGAD), and 93-96 (KGGG) each bind substrate. Catalysis depends on glutamate 102, which acts as the Proton acceptor. Lysine 120 is a substrate binding site.

This sequence belongs to the ribose 5-phosphate isomerase family. In terms of assembly, homodimer.

The enzyme catalyses aldehydo-D-ribose 5-phosphate = D-ribulose 5-phosphate. The protein operates within carbohydrate degradation; pentose phosphate pathway; D-ribose 5-phosphate from D-ribulose 5-phosphate (non-oxidative stage): step 1/1. Catalyzes the reversible conversion of ribose-5-phosphate to ribulose 5-phosphate. This Bacillus cereus (strain ZK / E33L) protein is Ribose-5-phosphate isomerase A.